Here is a 325-residue protein sequence, read N- to C-terminus: Ribose-phosphate pyrophosphokinase (325 aa).

Residues Asn-45–Glu-47 and Arg-104–Gln-105 contribute to the ATP site. Positions 138 and 178 each coordinate Mg(2+). Lys-202 is a catalytic residue. D-ribose 5-phosphate is bound by residues Arg-204, Asp-230, and Asp-234–Thr-238.

The protein belongs to the ribose-phosphate pyrophosphokinase family. Class I subfamily. As to quaternary structure, homohexamer. The cofactor is Mg(2+).

Its subcellular location is the cytoplasm. The enzyme catalyses D-ribose 5-phosphate + ATP = 5-phospho-alpha-D-ribose 1-diphosphate + AMP + H(+). Its pathway is metabolic intermediate biosynthesis; 5-phospho-alpha-D-ribose 1-diphosphate biosynthesis; 5-phospho-alpha-D-ribose 1-diphosphate from D-ribose 5-phosphate (route I): step 1/1. Functionally, involved in the biosynthesis of the central metabolite phospho-alpha-D-ribosyl-1-pyrophosphate (PRPP) via the transfer of pyrophosphoryl group from ATP to 1-hydroxyl of ribose-5-phosphate (Rib-5-P). This is Ribose-phosphate pyrophosphokinase from Corynebacterium glutamicum (strain ATCC 13032 / DSM 20300 / JCM 1318 / BCRC 11384 / CCUG 27702 / LMG 3730 / NBRC 12168 / NCIMB 10025 / NRRL B-2784 / 534).